The sequence spans 223 residues: Guanylate kinase (223 aa).

In terms of domain architecture, Guanylate kinase-like spans 6–183 (GRLFVMTGAS…AVADFLAILT (178 aa)). 13–20 (GASGVGKG) is an ATP binding site.

This sequence belongs to the guanylate kinase family.

Its subcellular location is the cytoplasm. It catalyses the reaction GMP + ATP = GDP + ADP. Its function is as follows. Essential for recycling GMP and indirectly, cGMP. The sequence is that of Guanylate kinase from Thermus thermophilus (strain ATCC 27634 / DSM 579 / HB8).